Reading from the N-terminus, the 130-residue chain is Small ribosomal subunit protein uS8 (130 aa).

Belongs to the universal ribosomal protein uS8 family. In terms of assembly, part of the 30S ribosomal subunit. Contacts proteins S5 and S12.

In terms of biological role, one of the primary rRNA binding proteins, it binds directly to 16S rRNA central domain where it helps coordinate assembly of the platform of the 30S subunit. In Buchnera aphidicola subsp. Acyrthosiphon kondoi (Acyrthosiphon kondoi symbiotic bacterium), this protein is Small ribosomal subunit protein uS8.